We begin with the raw amino-acid sequence, 104 residues long: U-scoloptoxin(10)-Cw1a (104 aa).

An N-terminal signal peptide occupies residues 1-23 (MNKTVAVFFAVICVICVIKSCKT).

Belongs to the scoloptoxin-10 family. Contains 3 disulfide bonds. As to expression, expressed by the venom gland.

Its subcellular location is the secreted. The polypeptide is U-scoloptoxin(10)-Cw1a (Cormocephalus westwoodi (Westwood's green centipede)).